Consider the following 446-residue polypeptide: MREIVHIQAGQCGNQIGGKFWEVISDEHCIDATGTYYGDSDLQLERINVYYNEATGAKYVPRAILVDLEPGTMDSVRSGRFGQIFRPDNFVFGQSGAGNNWAKGHYTEGAELVDSVLDVVRKESEGCDCLQGFQLTHSLGGGTGSGMGTLLISKIREEYPDRIMNTFSVVPSPKVSDTVVEPYNATLSVHQLVENTDETYCIDNEALYDICFRTLKLTTPTYGDLNHLVSATMSGVTTCLRFPGQLNADLRKLAVNMVPFPRLHFFMPGFAPLTSRGSQQYRALTVPELTQQMFDAKNMMAACDPRHGRYLTVAAIFRGRMSMKEVDEQMLNIQNKNSSFFVEWIPNNCKTAVCDIPPRGLKMSATFIGNSTAIQELFKRVSEQFTAMFRRKAFLHWYTGEGMDEMEFTEAESNMNDLVSEYQQYQEATADEEGEFDEDEEGGGDE.

Residues Gln11, Glu69, Ser138, Gly142, Thr143, Gly144, Asn204, and Asn226 each contribute to the GTP site. Residue Glu69 participates in Mg(2+) binding. The interval 424-446 (QYQEATADEEGEFDEDEEGGGDE) is disordered. Over residues 429 to 446 (TADEEGEFDEDEEGGGDE) the composition is skewed to acidic residues.

It belongs to the tubulin family. In terms of assembly, dimer of alpha and beta chains. A typical microtubule is a hollow water-filled tube with an outer diameter of 25 nm and an inner diameter of 15 nM. Alpha-beta heterodimers associate head-to-tail to form protofilaments running lengthwise along the microtubule wall with the beta-tubulin subunit facing the microtubule plus end conferring a structural polarity. Microtubules usually have 13 protofilaments but different protofilament numbers can be found in some organisms and specialized cells. Mg(2+) serves as cofactor.

Its subcellular location is the cytoplasm. The protein localises to the cytoskeleton. Functionally, tubulin is the major constituent of microtubules, a cylinder consisting of laterally associated linear protofilaments composed of alpha- and beta-tubulin heterodimers. Microtubules grow by the addition of GTP-tubulin dimers to the microtubule end, where a stabilizing cap forms. Below the cap, tubulin dimers are in GDP-bound state, owing to GTPase activity of alpha-tubulin. The polypeptide is Tubulin beta-2 chain (betaTub85D) (Drosophila erecta (Fruit fly)).